A 550-amino-acid chain; its full sequence is Probable acyl-activating enzyme 9 (550 aa).

The protein belongs to the ATP-dependent AMP-binding enzyme family. As to expression, expressed in leaves, flowers and developing seeds.

Its function is as follows. May act as an acid--thiol ligase that activates carboxylic acids by forming acyl-CoAs. This is Probable acyl-activating enzyme 9 (AEE9) from Arabidopsis thaliana (Mouse-ear cress).